The following is a 64-amino-acid chain: Disintegrin VA6 (64 aa).

Positions 1 to 64 constitute a Disintegrin domain; sequence NSANPCCDPV…SDCPRNPYKS (64 aa). 4 disulfides stabilise this stretch: Cys6/Cys29, Cys20/Cys26, Cys25/Cys50, and Cys38/Cys57. A Cell attachment site motif is present at residues 42–44; the sequence is RGD.

It belongs to the venom metalloproteinase (M12B) family. P-II subfamily. P-IId sub-subfamily. Homodimer; disulfide-linked. Expressed by the venom gland.

It is found in the secreted. Functionally, poor inhibitor of platelet aggregation. The disintegrin inhibits the adhesion of cells expressing the RGD-dependent integrin alpha-5/beta-1 (ITGA5/ITGB1) to immobilized fibronectin. Inhibition on alpha-IIb/beta-3 (ITGA2B/ITGB3) is low, and there is no inhibition on alpha-1/beta-1 (ITGA1/ITGB1), alpha-2/beta-1 (ITGA2/ITGB1) and alpha-6/beta-1 (ITGA6/ITGB1). This is Disintegrin VA6 from Vipera ammodytes ammodytes (Western sand viper).